Reading from the N-terminus, the 3097-residue chain is Neural-cadherin (3097 aa).

An N-terminal signal peptide occupies residues 1–36 (MAARRCLNQLRQRYITNRFNICTCAIFLISLPFILA). Residues Asn97 and Asn150 are each glycosylated (N-linked (GlcNAc...) asparagine). The Cadherin 1 domain maps to 181–305 (VRENQPAGTR…LDENDNRPIF (125 aa)). Asn325 and Asn426 each carry an N-linked (GlcNAc...) asparagine glycan. Cadherin domains lie at 430-543 (HREK…PPYF), 554-651 (VQLN…APQF), 660-756 (IPEN…APKF), 766-858 (VDED…EPKF), 867-968 (VDEN…KPVF), 978-1078 (VEEG…PPLF), 1087-1183 (VKQD…PPVW), 1193-1299 (VKEN…IPLF), 1307-1414 (VLEG…PPYF), 1423-1514 (VDEN…PPVF), 1523-1630 (ITEE…APIF), 1639-1742 (VTEN…PPQF), 1749-1861 (TEVD…KPHF), 1870-1966 (VFED…APKF), and 1974-2085 (LPEH…QPGS). A glycan (N-linked (GlcNAc...) asparagine) is linked at Asn930. N-linked (GlcNAc...) asparagine glycosylation occurs at Asn1266. 11 disulfide bridges follow: Cys2346/Cys2357, Cys2351/Cys2366, Cys2368/Cys2377, Cys2559/Cys2585, Cys2592/Cys2607, Cys2601/Cys2616, Cys2618/Cys2627, Cys2787/Cys2822, Cys2869/Cys2880, Cys2874/Cys2891, and Cys2893/Cys2902. Residues 2346–2377 (CRTTPCHNGGRCVDTRFGPHCSCPVGYTGPRC) form the EGF-like 1 domain. The 207-residue stretch at 2379–2585 (QTTRSFRGNG…GLSRNSVAGC (207 aa)) folds into the Laminin G-like 1 domain. The 36-residue stretch at 2592-2627 (CAQTETTARCWEHGNCVGSLSEARCHCRPGWTGPAC) folds into the EGF-like 2 domain. One can recognise a Laminin G-like 2 domain in the interval 2631-2822 (TIPTTFKAQS…TMARNLEKGC (192 aa)). Positions 2869–2902 (CLDMPCMNGATCINLEPRLRYRCICPDGFWGENC) constitute an EGF-like 3 domain. Residues 2917–2937 (ALAAILVCLLIILILVLVFVV) form a helical membrane-spanning segment. The Cytoplasmic portion of the chain corresponds to 2938-3097 (YNRRREAHIK…PNPHNTELEL (160 aa)).

As to expression, in the embryo, the protein first appears in the mesoderm at stage 9 and is present in the myoblasts and muscle fibers by stage 12 and stage 14, respectively. At stage 12 the protein is also located in the axons of the entire CNS, but not in the glial cells. In third instar larvae protein is expressed in the CNS neuropile, photoreceptor axons and precursors of adult muscles.

It is found in the cell membrane. Its function is as follows. Cadherins are calcium-dependent cell adhesion proteins. They preferentially interact with themselves in a homophilic manner in connecting cells; cadherins may thus contribute to the sorting of heterogeneous cell types. May associate with arm neural isoform and participate in the transmission of developmental information. The chain is Neural-cadherin (CadN) from Drosophila melanogaster (Fruit fly).